Consider the following 292-residue polypeptide: NAD kinase (292 aa).

The active-site Proton acceptor is Asp-73. Residues 73-74 (DG), 147-148 (NE), His-158, Arg-175, Asp-177, 188-193 (TGYSLS), and Gln-247 each bind NAD(+).

The protein belongs to the NAD kinase family. The cofactor is a divalent metal cation.

The protein resides in the cytoplasm. It catalyses the reaction NAD(+) + ATP = ADP + NADP(+) + H(+). Its function is as follows. Involved in the regulation of the intracellular balance of NAD and NADP, and is a key enzyme in the biosynthesis of NADP. Catalyzes specifically the phosphorylation on 2'-hydroxyl of the adenosine moiety of NAD to yield NADP. The chain is NAD kinase from Buchnera aphidicola subsp. Schizaphis graminum (strain Sg).